Reading from the N-terminus, the 1202-residue chain is PAN2-PAN3 deadenylation complex catalytic subunit PAN2 (1202 aa).

4 WD repeats span residues 153 to 193 (DENE…QKYA), 195 to 231 (ETPG…VEHE), 244 to 280 (VHGN…AITP), and 328 to 367 (PVGP…SFNP). Residues 368 to 485 (YSRETEFALP…VGREEEPHLH (118 aa)) are linker. The USP domain occupies 486–924 (MVSKKYRKVT…VPAILYYVKR (439 aa)). A Phosphoserine modification is found at serine 791. The Exonuclease domain occupies 975 to 1147 (VGLDAEFVTL…EDARTALQLY (173 aa)). A divalent metal cation is bound by residues aspartate 978, glutamate 980, aspartate 1087, and aspartate 1139. Serine 1189 is subject to Phosphoserine.

It belongs to the peptidase C19 family. PAN2 subfamily. As to quaternary structure, forms a heterotrimer with an asymmetric homodimer of the regulatory subunit PAN3 to form the poly(A)-nuclease (PAN) deadenylation complex. Interacts with PAN3 isoform 1/Pan3L and isoform 3/Pan3S. Interacts with ZFP36. It depends on a divalent metal cation as a cofactor.

It localises to the cytoplasm. Its subcellular location is the P-body. The protein localises to the nucleus. The enzyme catalyses Exonucleolytic cleavage of poly(A) to 5'-AMP.. With respect to regulation, positively regulated by the regulatory subunit PAN3. Catalytic subunit of the poly(A)-nuclease (PAN) deadenylation complex, one of two cytoplasmic mRNA deadenylases involved in general and miRNA-mediated mRNA turnover. PAN specifically shortens poly(A) tails of RNA and the activity is stimulated by poly(A)-binding protein (PABP). PAN deadenylation is followed by rapid degradation of the shortened mRNA tails by the CCR4-NOT complex. Deadenylated mRNAs are then degraded by two alternative mechanisms, namely exosome-mediated 3'-5' exonucleolytic degradation, or deadenylation-dependent mRNA decaping and subsequent 5'-3' exonucleolytic degradation by XRN1. Also acts as an important regulator of the HIF1A-mediated hypoxic response. Required for HIF1A mRNA stability independent of poly(A) tail length regulation. The polypeptide is PAN2-PAN3 deadenylation complex catalytic subunit PAN2 (Homo sapiens (Human)).